Reading from the N-terminus, the 501-residue chain is Phenylalanine--tRNA ligase alpha subunit (501 aa).

Positions 340 and 423 each coordinate L-phenylalanine. E425 is a Mg(2+) binding site. F448 contacts L-phenylalanine.

Belongs to the class-II aminoacyl-tRNA synthetase family. Phe-tRNA synthetase alpha subunit type 2 subfamily. In terms of assembly, tetramer of two alpha and two beta subunits. Mg(2+) serves as cofactor.

It localises to the cytoplasm. The catalysed reaction is tRNA(Phe) + L-phenylalanine + ATP = L-phenylalanyl-tRNA(Phe) + AMP + diphosphate + H(+). This chain is Phenylalanine--tRNA ligase alpha subunit, found in Methanococcus maripaludis (strain C7 / ATCC BAA-1331).